The following is a 150-amino-acid chain: FAD synthase (150 aa).

ATP-binding positions include 11–12, 16–19, D96, and Y124; these read TF and HPGH.

Belongs to the archaeal FAD synthase family. As to quaternary structure, homodimer. The cofactor is a divalent metal cation.

It catalyses the reaction FMN + ATP + H(+) = FAD + diphosphate. It functions in the pathway cofactor biosynthesis; FAD biosynthesis; FAD from FMN: step 1/1. In terms of biological role, catalyzes the transfer of the AMP portion of ATP to flavin mononucleotide (FMN) to produce flavin adenine dinucleotide (FAD) coenzyme. The protein is FAD synthase of Methanococcus maripaludis (strain C7 / ATCC BAA-1331).